The chain runs to 3625 residues: Cubilin (3625 aa).

The N-terminal stretch at 1–20 (MVNNMSLLFLWSLVIFLTFA) is a signal peptide. A propeptide spans 21–36 (ESYGEAGGPELQRHKR) (removed in mature form). The tract at residues 43-50 (PRMAAERG) is interaction with AMN. N106 carries N-linked (GlcNAc...) asparagine glycosylation. The region spanning 133–169 (DGKVCSSNPCQNGATCLNLHDSFFCICPSQWKGPLCS) is the EGF-like 1 domain. 6 cysteine pairs are disulfide-bonded: C137–C148, C142–C157, C159–C168, C175–C191, C185–C200, and C202–C211. The 42-residue stretch at 171-212 (DVNECEIYSGTPLGCQNGATCINTPGSYSCLCSPETHGPQCA) folds into the EGF-like 2; calcium-binding domain. The N-linked (GlcNAc...) asparagine glycan is linked to N257. In terms of domain architecture, EGF-like 3; calcium-binding spans 264 to 305 (DRDECSSWPAPCSALVPCFNTLGSFYCGACPTGWQGNGYICE). 20 disulfides stabilise this stretch: C268/C281, C275/C290, C293/C304, C310/C325, C317/C334, C337/C348, C354/C367, C361/C377, C379/C393, C400/C410, C405/C419, C421/C430, C437/C448, C442/C457, C459/C468, C475/C501, C528/C550, C591/C617, C644/C666, and C709/C734. Residues 306 to 349 (DINECEINNGGCSVAPPVECVNTPGSYYCPSCPPGYQGDGRMCT) form the EGF-like 4; calcium-binding domain. EGF-like domains are found at residues 350–394 (LIDL…HGCV) and 396–431 (LSNV…MNCT). An N-linked (GlcNAc...) asparagine glycan is attached at N429. One can recognise an EGF-like 7; calcium-binding domain in the interval 433 to 469 (NINECLSNPCLNGGTCVDGINAFSCECTRFWTGSLCH). CUB domains are found at residues 475–587 (CGGT…WETR), 591–703 (CGGV…YLTT), 709–816 (CGGN…YQVA), 817–928 (CGGE…FSTE), 932–1042 (CGEI…YEAT), 1045–1163 (SAGN…WDGS), 1167–1279 (CGGN…YQQT), 1280–1391 (CDNV…WLVH), 1393–1508 (CGGE…WRAV), 1512–1621 (CGGI…FRQA), 1622–1736 (CGGH…YVAS), 1740–1852 (CGGI…FNNI), 1854–1965 (GNDH…WFAM), 1980–2093 (CGGF…FHKS), 2094–2215 (CGGY…YEAK), 2219–2336 (CGGN…YSIA), 2338–2450 (CGGT…FDSS), 2454–2567 (CGGD…YTSS), 2572–2689 (CGGS…YSFT), 2691–2803 (CGGI…WNTE), 2807–2921 (CGGI…FLSR), 2922–3037 (CGRN…YRIT), 3039–3152 (CGGT…FRET), 3159–3276 (CGGY…YTLL), 3280–3397 (CGGT…IAGC), 3397–3509 (CSRE…WTSS), and 3513–3625 (CGGT…TWAS). N712 and N749 each carry an N-linked (GlcNAc...) asparagine glycan. The cysteines at positions 761 and 779 are disulfide-linked. A glycan (N-linked (GlcNAc...) asparagine) is linked at N781. C817 and C842 are oxidised to a cystine. A glycan (N-linked (GlcNAc...) asparagine) is linked at N857. 2 disulfide bridges follow: C869–C891 and C932–C958. N-linked (GlcNAc...) asparagine glycosylation occurs at N957. E980 lines the Ca(2+) pocket. The N-linked (GlcNAc...) asparagine glycan is linked to N984. Residues C985 and C1005 are joined by a disulfide bond. The Ca(2+) site is built by D988, D1027, D1029, and L1030. An N-linked (GlcNAc...) asparagine glycan is attached at N1048. Ca(2+) is bound by residues E1097, D1107, and D1148. A disulfide bond links C1104 and C1126. An intrachain disulfide couples C1167 to C1193. An N-linked (GlcNAc...) asparagine glycan is attached at N1170. E1215 is a Ca(2+) binding site. N1219 carries an N-linked (GlcNAc...) asparagine glycan. An intrachain disulfide couples C1220 to C1242. Residues D1223, D1264, G1266, and Q1267 each contribute to the Ca(2+) site. C1280 and C1308 form a disulfide bridge. N-linked (GlcNAc...) asparagine glycosylation is found at N1287, N1309, and N1321. E1330 lines the Ca(2+) pocket. An N-linked (GlcNAc...) asparagine glycan is attached at N1334. C1335 and C1353 are joined by a disulfide. The Ca(2+) site is built by D1338, D1375, and V1377. Cystine bridges form between C1393-C1419 and C1446-C1468. The N-linked (GlcNAc...) asparagine glycan is linked to N1502. C1512 and C1538 are disulfide-bonded. N-linked (GlcNAc...) asparagine glycosylation occurs at N1553. Cystine bridges form between C1565-C1583, C1622-C1649, C1677-C1699, C1740-C1766, and C1793-C1814. Residue N1648 is glycosylated (N-linked (GlcNAc...) asparagine). 3 N-linked (GlcNAc...) asparagine glycosylation sites follow: N1804, N1821, and N1887. 3 disulfide bridges follow: C1907–C1929, C1980–C2008, and C2034–C2056. N-linked (GlcNAc...) asparagine glycosylation is found at N2087 and N2119. 2 cysteine pairs are disulfide-bonded: C2094–C2120 and C2219–C2249. N-linked (GlcNAc...) asparagine glycosylation is present at N2276. 2 cysteine pairs are disulfide-bonded: C2277/C2299 and C2338/C2365. 2 N-linked (GlcNAc...) asparagine glycosylation sites follow: N2388 and N2402. Disulfide bonds link C2392-C2413, C2454-C2480, and C2507-C2529. 4 N-linked (GlcNAc...) asparagine glycosylation sites follow: N2533, N2583, N2594, and N2612. Residues C2572 and C2601 are joined by a disulfide bond. 5 disulfides stabilise this stretch: C2630–C2651, C2691–C2717, C2744–C2766, C2807–C2833, and C2862–C2885. N-linked (GlcNAc...) asparagine glycans are attached at residues N2887, N2925, N2928, and N2947. 2 cysteine pairs are disulfide-bonded: C2922–C2948 and C2979–C3001. T3010 is modified (phosphothreonine). 2 disulfide bridges follow: C3039–C3066 and C3093–C3115. N3044, N3105, and N3127 each carry an N-linked (GlcNAc...) asparagine glycan. Disulfide bonds link C3159–C3187 and C3217–C3239. N-linked (GlcNAc...) asparagine glycosylation is found at N3270 and N3285. 2 disulfides stabilise this stretch: C3280/C3308 and C3334/C3356. A glycan (N-linked (GlcNAc...) asparagine) is linked at N3359. Cysteines 3397 and 3423 form a disulfide. 3 N-linked (GlcNAc...) asparagine glycosylation sites follow: N3432, N3459, and N3535. 3 disulfides stabilise this stretch: C3450-C3472, C3513-C3539, and C3566-C3588.

As to quaternary structure, interacts with AMN. Component of the cubam complex composed of one CUBN trimer and one AMN chain. The cubam complex can dimerize. Interacts with LRP2 in a dual-receptor complex in a calcium-dependent manner. Found in a complex with PID1/PCLI1, LRP1 and CUBNI. Interacts with LRP1 and PID1/PCLI1. Post-translationally, the precursor is cleaved by a trans-Golgi proteinase furin, removing a propeptide. In terms of processing, N-glycosylated. Detected in kidney cortex (at protein level).

It is found in the apical cell membrane. Its subcellular location is the cell membrane. The protein localises to the membrane. The protein resides in the coated pit. It localises to the endosome. It is found in the lysosome membrane. Functionally, endocytic receptor which plays a role in lipoprotein, vitamin and iron metabolism by facilitating their uptake. Acts together with LRP2 to mediate endocytosis of high-density lipoproteins, GC, hemoglobin, ALB, TF and SCGB1A1. Acts together with AMN to mediate endocytosis of the CBLIF-cobalamin complex. Binds to ALB, MB, Kappa and lambda-light chains, TF, hemoglobin, GC, SCGB1A1, APOA1, high density lipoprotein, and the CBLIF-cobalamin complex. Ligand binding requires calcium. Serves as important transporter in several absorptive epithelia, including intestine, renal proximal tubules and embryonic yolk sac. May play an important role in the development of the peri-implantation embryo through internalization of APOA1 and cholesterol. Binds to LGALS3 at the maternal-fetal interface. This chain is Cubilin (CUBN), found in Sus scrofa (Pig).